A 415-amino-acid polypeptide reads, in one-letter code: Serine/threonine transporter SstT (415 aa).

The next 8 membrane-spanning stretches (helical) occupy residues Ile23–Ala43, Leu47–Val67, Ile85–Phe105, Ala144–Leu164, Ala181–Val201, Leu220–Phe240, Ile293–Leu313, and Val333–Ile353.

Belongs to the dicarboxylate/amino acid:cation symporter (DAACS) (TC 2.A.23) family.

The protein localises to the cell inner membrane. It carries out the reaction L-serine(in) + Na(+)(in) = L-serine(out) + Na(+)(out). It catalyses the reaction L-threonine(in) + Na(+)(in) = L-threonine(out) + Na(+)(out). Functionally, involved in the import of serine and threonine into the cell, with the concomitant import of sodium (symport system). The protein is Serine/threonine transporter SstT of Klebsiella pneumoniae (strain 342).